Here is a 195-residue protein sequence, read N- to C-terminus: Group XIIB secretory phospholipase A2-like protein (195 aa).

Positions 1 to 19 (MKLLCGFFLLWLGLVGNLA) are cleaved as a signal peptide. Ca(2+) contacts are provided by Ser89, Tyr91, Leu93, and Asp116.

Belongs to the phospholipase A2 family. It depends on Ca(2+) as a cofactor.

The protein resides in the secreted. Functionally, not known; does not seem to have catalytic activity. The chain is Group XIIB secretory phospholipase A2-like protein (Pla2g12b) from Mus musculus (Mouse).